The following is a 160-amino-acid chain: 2-C-methyl-D-erythritol 2,4-cyclodiphosphate synthase (160 aa).

2 residues coordinate a divalent metal cation: aspartate 10 and histidine 12. 4-CDP-2-C-methyl-D-erythritol 2-phosphate-binding positions include 10-12 (DVH) and 36-37 (HS). A divalent metal cation is bound at residue histidine 44. 4-CDP-2-C-methyl-D-erythritol 2-phosphate-binding positions include 58–60 (DIG), 134–137 (TTTE), phenylalanine 141, and arginine 144.

Belongs to the IspF family. As to quaternary structure, homotrimer. The cofactor is a divalent metal cation.

The catalysed reaction is 4-CDP-2-C-methyl-D-erythritol 2-phosphate = 2-C-methyl-D-erythritol 2,4-cyclic diphosphate + CMP. Its pathway is isoprenoid biosynthesis; isopentenyl diphosphate biosynthesis via DXP pathway; isopentenyl diphosphate from 1-deoxy-D-xylulose 5-phosphate: step 4/6. Its function is as follows. Involved in the biosynthesis of isopentenyl diphosphate (IPP) and dimethylallyl diphosphate (DMAPP), two major building blocks of isoprenoid compounds. Catalyzes the conversion of 4-diphosphocytidyl-2-C-methyl-D-erythritol 2-phosphate (CDP-ME2P) to 2-C-methyl-D-erythritol 2,4-cyclodiphosphate (ME-CPP) with a corresponding release of cytidine 5-monophosphate (CMP). In Phocaeicola vulgatus (strain ATCC 8482 / DSM 1447 / JCM 5826 / CCUG 4940 / NBRC 14291 / NCTC 11154) (Bacteroides vulgatus), this protein is 2-C-methyl-D-erythritol 2,4-cyclodiphosphate synthase.